The primary structure comprises 1132 residues: Telomerase reverse transcriptase (1132 aa).

Residues 1–66 (MSAKKPVQSK…NQNNANSGGN (66 aa)) are disordered. 2 stretches are compositionally biased toward polar residues: residues 9–26 (SKLN…NRST) and 45–55 (QSQNTTTGAFR). The Reverse transcriptase domain maps to 602–956 (KEMRIFCESQ…DLFHWIGISI (355 aa)). Asp708, Asp886, and Asp887 together coordinate Mg(2+).

Belongs to the reverse transcriptase family. Telomerase subfamily.

Its subcellular location is the nucleus. It is found in the chromosome. The protein localises to the telomere. The catalysed reaction is DNA(n) + a 2'-deoxyribonucleoside 5'-triphosphate = DNA(n+1) + diphosphate. In terms of biological role, telomerase is a ribonucleoprotein enzyme essential for the replication of chromosome termini in most eukaryotes. It elongates telomeres. It is a reverse transcriptase that adds simple sequence repeats to chromosome ends by copying a template sequence within the RNA component of the enzyme. The polypeptide is Telomerase reverse transcriptase (TERT) (Oxytricha trifallax (Sterkiella histriomuscorum)).